Consider the following 162-residue polypeptide: Phosphopantetheine adenylyltransferase (162 aa).

Residue Thr-10 participates in substrate binding. Residues 10–11 (TF) and His-18 each bind ATP. Substrate-binding residues include Lys-42, Met-74, and Arg-88. Residues 89–91 (GLR), Glu-99, and 124–130 (YAFLSST) contribute to the ATP site.

It belongs to the bacterial CoaD family. Homohexamer. Mg(2+) is required as a cofactor.

The protein localises to the cytoplasm. The catalysed reaction is (R)-4'-phosphopantetheine + ATP + H(+) = 3'-dephospho-CoA + diphosphate. The protein operates within cofactor biosynthesis; coenzyme A biosynthesis; CoA from (R)-pantothenate: step 4/5. Reversibly transfers an adenylyl group from ATP to 4'-phosphopantetheine, yielding dephospho-CoA (dPCoA) and pyrophosphate. The polypeptide is Phosphopantetheine adenylyltransferase (Aliivibrio salmonicida (strain LFI1238) (Vibrio salmonicida (strain LFI1238))).